We begin with the raw amino-acid sequence, 336 residues long: Eukaryotic translation initiation factor 3 subunit I (336 aa).

WD repeat units follow at residues 8-49 (GHER…GTYN), 50-91 (GHNG…KAWE), 93-135 (PTAI…GPQP), 144-183 (PIGS…EVAS), 187-226 (NHIG…VIKS), and 285-324 (GGFG…FRAK).

This sequence belongs to the eIF-3 subunit I family. Component of the eukaryotic translation initiation factor 3 (eIF-3) complex.

The protein resides in the cytoplasm. Its function is as follows. Component of the eukaryotic translation initiation factor 3 (eIF-3) complex, which is involved in protein synthesis of a specialized repertoire of mRNAs and, together with other initiation factors, stimulates binding of mRNA and methionyl-tRNAi to the 40S ribosome. The eIF-3 complex specifically targets and initiates translation of a subset of mRNAs involved in cell proliferation. This is Eukaryotic translation initiation factor 3 subunit I from Puccinia graminis f. sp. tritici (strain CRL 75-36-700-3 / race SCCL) (Black stem rust fungus).